The primary structure comprises 495 residues: Neuronal acetylcholine receptor subunit alpha-3 (495 aa).

Positions 1-21 (MARRSRLRRLLLLLLLPVAST) are cleaved as a signal peptide. Topologically, residues 22–240 (SDAEHRLFER…PLFYTINLII (219 aa)) are extracellular. N-linked (GlcNAc...) asparagine glycosylation is found at Asn45 and Asn162. Intrachain disulfides connect Cys149/Cys163 and Cys213/Cys214. The helical transmembrane segment at 241–256 (PCLLISFLTVLVFYLP) threads the bilayer. At 257-258 (SD) the chain is on the cytoplasmic side. A helical membrane pass occupies residues 259-275 (CGEKVTLCISVLLSLTV). Glu261 contributes to the Na(+) binding site. The Extracellular segment spans residues 276–297 (FLLVITETIPSTSLVIPLIGEY). Residues 298-316 (LLFTMIFVTLSIVITVFVL) traverse the membrane as a helical segment. Residues 317–464 (NVHYRTPTTH…QDDWKYVAMV (148 aa)) are Cytoplasmic-facing. Phosphoserine is present on residues Ser403 and Ser406. The helical transmembrane segment at 465–483 (IDRIFLWVFILVCILGTAG) threads the bilayer. The Extracellular segment spans residues 484–495 (LFLQPLMTRDDA).

Belongs to the ligand-gated ion channel (TC 1.A.9) family. Acetylcholine receptor (TC 1.A.9.1) subfamily. Alpha-3/CHRNA3 sub-subfamily. As to quaternary structure, neuronal AChR is composed of two different types of subunits: alpha and beta. CHRNA3/Alpha-3 subunit can be combined to CHRNB2/beta-2 or CHRNB4/beta-4 to give rise to functional receptors. Part of a complex composed of STUB1/CHIP, VCP/p97, CHRNA3, and UBXN2A that modulates the ubiquitination and endoplasmic reticulum-associated degradation (ERAD) of CHRNA3. Within the complex UBXN2A acts as a scaffold protein required for the interaction of CHRNA3 with VCP/p97, this interaction also inhibits CHRNA3 ubiquitination by STUB1/CHIP and subsequently ERAD. Interacts with UBXN2A (via SEP domain), the interaction is required for the interaction of CHRNA3 in the STUB1:VCP:UBXN2A complex. Interacts with RIC3; which is required for proper folding and assembly. Interacts with LYPD6. Ubiquitinated; by STUB1/CHIP and thereafter degraded by the 26S proteosome complex.

The protein localises to the synaptic cell membrane. It localises to the cell membrane. It is found in the endoplasmic reticulum. The protein resides in the golgi apparatus. The enzyme catalyses K(+)(in) = K(+)(out). It catalyses the reaction Na(+)(in) = Na(+)(out). It carries out the reaction Ca(2+)(in) = Ca(2+)(out). Its activity is regulated as follows. Activated by a myriad of ligands such as acetylcholine, cytisine, nicotine, choline and epibatidine. The heteropentamer CHRNA3:CHRNB2 activity is blocked by alpha-conotoxins ImI, ImII, PnIA, GID and MII. The heteropentamer CHRNA3:CHRNB4 activity is blocked by the alpha-conotoxin ImI and AuIB. Functionally, component of neuronal acetylcholine receptors (nAChRs) that function as pentameric, ligand-gated cation channels with high calcium permeability among other activities. nAChRs are excitatory neurotrasnmitter receptors formed by a collection of nAChR subunits known to mediate synaptic transmission in the nervous system and the neuromuscular junction. Each nAchR subunit confers differential attributes to channel properties, including activation, deactivation and desensitization kinetics, pH sensitivity, cation permeability, and binding to allosteric modulators. CHRNA3 forms heteropentameric neuronal acetylcholine receptors with CHRNB2 and CHRNB4. CHRNA3:CHRNB4 being predominant in neurons of the autonomic ganglia, it is known as ganglionic nicotinic receptor. CHRNA3:CHRNB4 also plays an important role in the habenulo-interpeduncular tract, modulating the mesolimbic dopamine system and affecting reward circuits and addiction. Hypothalamic CHRNA3:CHRNB4 nAChR activation by nicotine leads to activation of POMC neurons and a decrease in food intake. Also expressed in the urothelium where it modulates reflex bladder activity by increasing intracellular calcium through extracellular influx and basal ATP release. The polypeptide is Neuronal acetylcholine receptor subunit alpha-3 (CHRNA3) (Bos taurus (Bovine)).